The chain runs to 205 residues: GTP cyclohydrolase 1 (205 aa).

3 residues coordinate Zn(2+): C94, H97, and C165.

It belongs to the GTP cyclohydrolase I family. In terms of assembly, toroid-shaped homodecamer, composed of two pentamers of five dimers.

It carries out the reaction GTP + H2O = 7,8-dihydroneopterin 3'-triphosphate + formate + H(+). It participates in cofactor biosynthesis; 7,8-dihydroneopterin triphosphate biosynthesis; 7,8-dihydroneopterin triphosphate from GTP: step 1/1. This is GTP cyclohydrolase 1 from Sinorhizobium medicae (strain WSM419) (Ensifer medicae).